Here is a 122-residue protein sequence, read N- to C-terminus: Ribosome-binding factor A (122 aa).

Belongs to the RbfA family. As to quaternary structure, monomer. Binds 30S ribosomal subunits, but not 50S ribosomal subunits or 70S ribosomes.

It is found in the cytoplasm. Its function is as follows. One of several proteins that assist in the late maturation steps of the functional core of the 30S ribosomal subunit. Associates with free 30S ribosomal subunits (but not with 30S subunits that are part of 70S ribosomes or polysomes). Required for efficient processing of 16S rRNA. May interact with the 5'-terminal helix region of 16S rRNA. The sequence is that of Ribosome-binding factor A from Halothermothrix orenii (strain H 168 / OCM 544 / DSM 9562).